A 347-amino-acid chain; its full sequence is Cell shape-determining protein MreB (347 aa).

ATP-binding positions include 19 to 21 (TAN), 168 to 170 (GGT), 216 to 219 (ERIK), and 296 to 299 (GGAL).

Belongs to the FtsA/MreB family. Forms polymers.

It localises to the cytoplasm. Its function is as follows. Forms membrane-associated dynamic filaments that are essential for cell shape determination. Acts by regulating cell wall synthesis and cell elongation, and thus cell shape. A feedback loop between cell geometry and MreB localization may maintain elongated cell shape by targeting cell wall growth to regions of negative cell wall curvature. This is Cell shape-determining protein MreB from Escherichia coli O6:H1 (strain CFT073 / ATCC 700928 / UPEC).